The following is a 127-amino-acid chain: Small ribosomal subunit protein uS13 (127 aa).

The disordered stretch occupies residues 92–127; that stretch reads HRMGLPVRGQRTRTNARTRRGVRRTVAGKKKASAKK. A compositionally biased stretch (basic residues) spans 101–127; that stretch reads QRTRTNARTRRGVRRTVAGKKKASAKK.

The protein belongs to the universal ribosomal protein uS13 family. Part of the 30S ribosomal subunit. Forms a loose heterodimer with protein S19. Forms two bridges to the 50S subunit in the 70S ribosome.

In terms of biological role, located at the top of the head of the 30S subunit, it contacts several helices of the 16S rRNA. In the 70S ribosome it contacts the 23S rRNA (bridge B1a) and protein L5 of the 50S subunit (bridge B1b), connecting the 2 subunits; these bridges are implicated in subunit movement. Contacts the tRNAs in the A and P-sites. This Trichodesmium erythraeum (strain IMS101) protein is Small ribosomal subunit protein uS13.